The sequence spans 126 residues: Glycine cleavage system H protein (126 aa).

The Lipoyl-binding domain maps to 21-103; sequence TVTVGISNHA…YEGGWIARIK (83 aa). Lysine 62 is modified (N6-lipoyllysine).

The protein belongs to the GcvH family. As to quaternary structure, the glycine cleavage system is composed of four proteins: P, T, L and H. The cofactor is (R)-lipoate.

Functionally, the glycine cleavage system catalyzes the degradation of glycine. The H protein shuttles the methylamine group of glycine from the P protein to the T protein. This Aliivibrio salmonicida (strain LFI1238) (Vibrio salmonicida (strain LFI1238)) protein is Glycine cleavage system H protein.